A 198-amino-acid chain; its full sequence is Peptidyl-tRNA hydrolase (198 aa).

TRNA is bound at residue Tyr17. The Proton acceptor role is filled by His22. Residues Tyr74, Asn76, and Asn122 each contribute to the tRNA site.

This sequence belongs to the PTH family. As to quaternary structure, monomer.

The protein localises to the cytoplasm. The enzyme catalyses an N-acyl-L-alpha-aminoacyl-tRNA + H2O = an N-acyl-L-amino acid + a tRNA + H(+). Functionally, hydrolyzes ribosome-free peptidyl-tRNAs (with 1 or more amino acids incorporated), which drop off the ribosome during protein synthesis, or as a result of ribosome stalling. Catalyzes the release of premature peptidyl moieties from peptidyl-tRNA molecules trapped in stalled 50S ribosomal subunits, and thus maintains levels of free tRNAs and 50S ribosomes. This is Peptidyl-tRNA hydrolase from Kineococcus radiotolerans (strain ATCC BAA-149 / DSM 14245 / SRS30216).